The primary structure comprises 643 residues: 1-deoxy-D-xylulose-5-phosphate synthase (643 aa).

Thiamine diphosphate-binding positions include His78 and 119–121 (AHS). Residue Asp150 coordinates Mg(2+). Thiamine diphosphate-binding positions include 151-152 (GS), Asn179, Tyr288, and Glu370. Asn179 contributes to the Mg(2+) binding site.

The protein belongs to the transketolase family. DXPS subfamily. Homodimer. Requires Mg(2+) as cofactor. It depends on thiamine diphosphate as a cofactor.

The catalysed reaction is D-glyceraldehyde 3-phosphate + pyruvate + H(+) = 1-deoxy-D-xylulose 5-phosphate + CO2. It participates in metabolic intermediate biosynthesis; 1-deoxy-D-xylulose 5-phosphate biosynthesis; 1-deoxy-D-xylulose 5-phosphate from D-glyceraldehyde 3-phosphate and pyruvate: step 1/1. Functionally, catalyzes the acyloin condensation reaction between C atoms 2 and 3 of pyruvate and glyceraldehyde 3-phosphate to yield 1-deoxy-D-xylulose-5-phosphate (DXP). This Brucella suis (strain ATCC 23445 / NCTC 10510) protein is 1-deoxy-D-xylulose-5-phosphate synthase.